We begin with the raw amino-acid sequence, 117 residues long: Minor capsid protein p17 (117 aa).

Residue Asn-12 is glycosylated (N-linked (GlcNAc...) asparagine; by host). Residues 39-59 traverse the membrane as a helical segment; sequence AILLGILILLVIILIIVAIVY. The tract at residues 96–117 is disordered; that stretch reads KNSTSQQSHIPSDEQLAELAHS. N-linked (GlcNAc...) asparagine; by host glycosylation occurs at Asn-97.

The protein belongs to the asfivirus minor capsid protein p17 family. In terms of assembly, interacts with the minor capsid protein M1249L and with the hexon capsid protein p72 capsomers; these interactions form a rigid zipper structure that stabilizes the capsomers. Interacts with host STING1.

It is found in the virion membrane. Its subcellular location is the host endoplasmic reticulum membrane. Functionally, together with the penton and the other minor capsid proteins (M1249L, p49), forms a complicated network immediately below the outer capsid shell, stabilizing the whole capsid. Three copies of p17 encircle each p72 capsomer in the inner capsid shell, anchoring p72 capsomers on the inner membrane. Required for the assembly of the capsid and icosahedral morphogenesis. Additionally, inhibits the host cGAS-STING pathway through its interaction with STING1 and subsequent interference of the recruitment of downstream components TBK1 and IKBKE. This chain is Minor capsid protein p17, found in African swine fever virus (isolate Warthog/Namibia/Wart80/1980) (ASFV).